An 86-amino-acid chain; its full sequence is Kappa-theraphotoxin-Cg1a 4 (86 aa).

An N-terminal signal peptide occupies residues M1 to A21. Residues A22 to R50 constitute a propeptide that is removed on maturation. 3 cysteine pairs are disulfide-bonded: C52–C66, C59–C71, and C65–C78. Position 84 is a phenylalanine amide (F84).

This sequence belongs to the neurotoxin 10 (Hwtx-1) family. 28 (Jztx-11) subfamily. As to expression, expressed by the venom gland.

It is found in the secreted. Functionally, this toxin acts as a voltage-dependent gating-modifier. It inhibits the sodium conductance (IC(50)=124 nM) and slows the fast inactivation (EC(50)=1180 nM) of Nav1.5/SCN5A. It significantly shifts the activation to more depolarized voltages and decreases the deactivation of Nav1.5 currents upon extreme depolarization, but only slightly affects voltage-dependence of steady-state inactivation. In addition, this toxin causes an approximately five-fold decrease in the rate of recovery from inactivation and an approximately 1.9-fold reduction in the closed-state inactivation rate. This toxin integrates the functions of site 3 toxins (alpha-scorpion toxins) with site 4 toxins (beta-scorpion and spider toxins) by targeting multiple sites on Nav1.5. Also shows inhibition of voltage-gated potassium channels (5 uM completely inhibits Kv2.1/KCNB1, whereas 5 uM moderately inhibits Kv4.2/KCND2 Kv4.1/KCND1 channels). The sequence is that of Kappa-theraphotoxin-Cg1a 4 from Chilobrachys guangxiensis (Chinese earth tiger tarantula).